The chain runs to 800 residues: DNA topoisomerase 1 (800 aa).

Residues 1–111 (MKLVIVESPA…VKSDDFFKRV (111 aa)) enclose the Toprim domain. Mg(2+) is bound by residues E7 and D80. Residues 132-568 (DNNLVNAQQA…FWNGFNHNIE (437 aa)) form the Topo IA-type catalytic domain. Residues 166-171 (SAGRVQ) are interaction with DNA. Y304 serves as the catalytic O-(5'-phospho-DNA)-tyrosine intermediate. The C4-type zinc finger occupies 600–627 (CPSCKTGELSLKLGKFGAFLACSNYPEC).

The protein belongs to the type IA topoisomerase family. In terms of assembly, monomer. Requires Mg(2+) as cofactor.

The enzyme catalyses ATP-independent breakage of single-stranded DNA, followed by passage and rejoining.. Functionally, releases the supercoiling and torsional tension of DNA, which is introduced during the DNA replication and transcription, by transiently cleaving and rejoining one strand of the DNA duplex. Introduces a single-strand break via transesterification at a target site in duplex DNA. The scissile phosphodiester is attacked by the catalytic tyrosine of the enzyme, resulting in the formation of a DNA-(5'-phosphotyrosyl)-enzyme intermediate and the expulsion of a 3'-OH DNA strand. The free DNA strand then undergoes passage around the unbroken strand, thus removing DNA supercoils. Finally, in the religation step, the DNA 3'-OH attacks the covalent intermediate to expel the active-site tyrosine and restore the DNA phosphodiester backbone. In Rickettsia bellii (strain RML369-C), this protein is DNA topoisomerase 1.